We begin with the raw amino-acid sequence, 351 residues long: Mediator of RNA polymerase II transcription subunit 18 (351 aa).

The interval 153–231 (GNGDPIDIDT…LPQSLSNGVS (79 aa)) is disordered. The span at 163–204 (NNDKQGDNNTDKPKQEHDGKLPEAIDEDIIKNGDEKKTTHDD) shows a compositional bias: basic and acidic residues. Residues 205-216 (NDSDIMEIDEPN) show a composition bias toward acidic residues. Over residues 217-231 (PETQTLPQSLSNGVS) the composition is skewed to polar residues.

The protein belongs to the Mediator complex subunit 18 family. As to quaternary structure, component of the Mediator complex.

It localises to the nucleus. Component of the Mediator complex, a coactivator involved in the regulated transcription of nearly all RNA polymerase II-dependent genes. Mediator functions as a bridge to convey information from gene-specific regulatory proteins to the basal RNA polymerase II transcription machinery. Mediator is recruited to promoters by direct interactions with regulatory proteins and serves as a scaffold for the assembly of a functional preinitiation complex with RNA polymerase II and the general transcription factors. The polypeptide is Mediator of RNA polymerase II transcription subunit 18 (SRB5) (Candida albicans (strain SC5314 / ATCC MYA-2876) (Yeast)).